The sequence spans 379 residues: Alcohol dehydrogenase 1 (379 aa).

The Zn(2+) site is built by cysteine 47, threonine 49, histidine 69, cysteine 99, cysteine 102, cysteine 105, cysteine 113, and cysteine 177. An alcohol contacts are provided by threonine 49 and histidine 69. Threonine 49 serves as a coordination point for NAD(+). Residues glycine 202–glycine 207, aspartate 226, arginine 231, threonine 272, valine 295, valine 295–valine 297, phenylalanine 322, and arginine 372 contribute to the NAD(+) site.

It belongs to the zinc-containing alcohol dehydrogenase family. As to quaternary structure, homodimer. Zn(2+) is required as a cofactor.

It is found in the cytoplasm. It catalyses the reaction a primary alcohol + NAD(+) = an aldehyde + NADH + H(+). The enzyme catalyses a secondary alcohol + NAD(+) = a ketone + NADH + H(+). This is Alcohol dehydrogenase 1 (ADH1) from Cenchrus americanus (Pearl millet).